We begin with the raw amino-acid sequence, 427 residues long: Adenylosuccinate synthetase (427 aa).

Residues 12-18 (GDEGKGK) and 40-42 (GHT) contribute to the GTP site. Asp13 acts as the Proton acceptor in catalysis. Mg(2+)-binding residues include Asp13 and Gly40. Residues 13–16 (DEGK), 38–41 (NAGH), Thr128, Arg142, Gln223, Thr238, and Arg302 contribute to the IMP site. Catalysis depends on His41, which acts as the Proton donor. A substrate-binding site is contributed by 298–304 (TTTGRAR). GTP contacts are provided by residues Arg304, 330–332 (KLD), and 412–414 (AVG).

This sequence belongs to the adenylosuccinate synthetase family. Homodimer. The cofactor is Mg(2+).

Its subcellular location is the cytoplasm. It catalyses the reaction IMP + L-aspartate + GTP = N(6)-(1,2-dicarboxyethyl)-AMP + GDP + phosphate + 2 H(+). Its pathway is purine metabolism; AMP biosynthesis via de novo pathway; AMP from IMP: step 1/2. Functionally, plays an important role in the de novo pathway of purine nucleotide biosynthesis. Catalyzes the first committed step in the biosynthesis of AMP from IMP. The chain is Adenylosuccinate synthetase from Desulfitobacterium hafniense (strain DSM 10664 / DCB-2).